The sequence spans 345 residues: Dihydroorotase (345 aa).

The Zn(2+) site is built by H14 and H16. Substrate is bound by residues 16-18 (HLR) and N42. Zn(2+) is bound by residues K100, H137, and H175. N6-carboxylysine is present on K100. Residue H137 coordinates substrate. L220 provides a ligand contact to substrate. D248 lines the Zn(2+) pocket. Residue D248 is part of the active site. Residues H252 and A264 each coordinate substrate.

It belongs to the metallo-dependent hydrolases superfamily. DHOase family. Class II DHOase subfamily. In terms of assembly, homodimer. The cofactor is Zn(2+).

The enzyme catalyses (S)-dihydroorotate + H2O = N-carbamoyl-L-aspartate + H(+). Its pathway is pyrimidine metabolism; UMP biosynthesis via de novo pathway; (S)-dihydroorotate from bicarbonate: step 3/3. Functionally, catalyzes the reversible cyclization of carbamoyl aspartate to dihydroorotate. The sequence is that of Dihydroorotase from Nitrosococcus oceani (strain ATCC 19707 / BCRC 17464 / JCM 30415 / NCIMB 11848 / C-107).